We begin with the raw amino-acid sequence, 448 residues long: Probable glycine dehydrogenase (decarboxylating) subunit 1 (448 aa).

It belongs to the GcvP family. N-terminal subunit subfamily. In terms of assembly, the glycine cleavage system is composed of four proteins: P, T, L and H. In this organism, the P 'protein' is a heterodimer of two subunits.

The enzyme catalyses N(6)-[(R)-lipoyl]-L-lysyl-[glycine-cleavage complex H protein] + glycine + H(+) = N(6)-[(R)-S(8)-aminomethyldihydrolipoyl]-L-lysyl-[glycine-cleavage complex H protein] + CO2. Its function is as follows. The glycine cleavage system catalyzes the degradation of glycine. The P protein binds the alpha-amino group of glycine through its pyridoxal phosphate cofactor; CO(2) is released and the remaining methylamine moiety is then transferred to the lipoamide cofactor of the H protein. This is Probable glycine dehydrogenase (decarboxylating) subunit 1 from Listeria monocytogenes serotype 4b (strain F2365).